The chain runs to 348 residues: GMP reductase 2 (348 aa).

NADP(+) contacts are provided by residues 26 to 27 (SR), Lys-78, 129 to 131 (DVA), and 180 to 181 (IG). Gly-181, Gly-183, and Cys-186 together coordinate K(+). The active-site Thioimidate intermediate is the Cys-186. Residue Thr-188 is the Proton donor/acceptor of the active site. Residue Arg-189 participates in K(+) binding. GMP is bound by residues 219–221 (DGG), 242–243 (GG), 268–270 (GMS), and 286–290 (RASEG). NADP(+)-binding positions include Met-269 and 285–286 (YR). An N6-acetyllysine modification is found at Lys-291. Position 314–317 (314–317 (STCT)) interacts with NADP(+).

Belongs to the IMPDH/GMPR family. GuaC type 1 subfamily. Homotetramer. As to expression, highly expressed in heart, skeletal muscle, kidney, brain, liver, prostate, spleen, placenta, testis and ovary. Low expression in colon, thymus and peripheral blood leukocytes.

The catalysed reaction is IMP + NH4(+) + NADP(+) = GMP + NADPH + 2 H(+). Functionally, catalyzes the irreversible NADPH-dependent deamination of GMP to IMP. It functions in the conversion of nucleobase, nucleoside and nucleotide derivatives of G to A nucleotides, and in maintaining the intracellular balance of A and G nucleotides. Plays a role in modulating cellular differentiation. This Homo sapiens (Human) protein is GMP reductase 2.